The following is a 156-amino-acid chain: Succinate dehydrogenase assembly factor 2-B, mitochondrial (156 aa).

Residues 1–24 (MLRQFIISRVGRRLQLPMITQSRL) constitute a mitochondrion transit peptide.

It belongs to the SDHAF2 family. As to quaternary structure, interacts with the flavoprotein subunit within the SDH catalytic dimer.

The protein localises to the mitochondrion matrix. Plays an essential role in the assembly of succinate dehydrogenase (SDH), an enzyme complex (also referred to as respiratory complex II) that is a component of both the tricarboxylic acid (TCA) cycle and the mitochondrial electron transport chain, and which couples the oxidation of succinate to fumarate with the reduction of ubiquinone (coenzyme Q) to ubiquinol. Required for flavinylation (covalent attachment of FAD) of the flavoprotein subunit of the SDH catalytic dimer. This Drosophila sechellia (Fruit fly) protein is Succinate dehydrogenase assembly factor 2-B, mitochondrial.